Consider the following 471-residue polypeptide: Ribulose bisphosphate carboxylase large chain (471 aa).

Residues asparagine 115 and threonine 165 each coordinate substrate. The Proton acceptor role is filled by lysine 167. Lysine 169 lines the substrate pocket. Residues lysine 193, aspartate 195, and glutamate 196 each contribute to the Mg(2+) site. An N6-carboxylysine modification is found at lysine 193. Histidine 286 functions as the Proton acceptor in the catalytic mechanism. The substrate site is built by arginine 287, histidine 319, and serine 371.

Belongs to the RuBisCO large chain family. Type I subfamily. As to quaternary structure, heterohexadecamer of 8 large chains and 8 small chains. Mg(2+) is required as a cofactor.

The enzyme catalyses 2 (2R)-3-phosphoglycerate + 2 H(+) = D-ribulose 1,5-bisphosphate + CO2 + H2O. It catalyses the reaction D-ribulose 1,5-bisphosphate + O2 = 2-phosphoglycolate + (2R)-3-phosphoglycerate + 2 H(+). RuBisCO catalyzes two reactions: the carboxylation of D-ribulose 1,5-bisphosphate, the primary event in carbon dioxide fixation, as well as the oxidative fragmentation of the pentose substrate. Both reactions occur simultaneously and in competition at the same active site. The chain is Ribulose bisphosphate carboxylase large chain from Alvinoconcha hessleri symbiotic bacterium.